The sequence spans 250 residues: Hydroxyacylglutathione hydrolase (250 aa).

7 residues coordinate Zn(2+): His52, His54, Asp56, His57, His107, Asp128, and His166.

Belongs to the metallo-beta-lactamase superfamily. Glyoxalase II family. Monomer. It depends on Zn(2+) as a cofactor.

It catalyses the reaction an S-(2-hydroxyacyl)glutathione + H2O = a 2-hydroxy carboxylate + glutathione + H(+). The protein operates within secondary metabolite metabolism; methylglyoxal degradation; (R)-lactate from methylglyoxal: step 2/2. In terms of biological role, thiolesterase that catalyzes the hydrolysis of S-D-lactoyl-glutathione to form glutathione and D-lactic acid. The sequence is that of Hydroxyacylglutathione hydrolase from Neisseria meningitidis serogroup A / serotype 4A (strain DSM 15465 / Z2491).